The sequence spans 400 residues: Elongation factor Tu (400 aa).

The region spanning 10–209 is the tr-type G domain; sequence KPHINIGTIG…AVDDYIPTPE (200 aa). The G1 stretch occupies residues 19-26; that stretch reads GHVDHGKT. Residue 19–26 coordinates GTP; that stretch reads GHVDHGKT. Mg(2+) is bound at residue Thr-26. The tract at residues 60-64 is G2; sequence GITIS. The tract at residues 81–84 is G3; it reads DCPG. GTP-binding positions include 81–85 and 136–139; these read DCPGH and NKVD. The G4 stretch occupies residues 136–139; that stretch reads NKVD. A G5 region spans residues 174–176; sequence SAK.

It belongs to the TRAFAC class translation factor GTPase superfamily. Classic translation factor GTPase family. EF-Tu/EF-1A subfamily. In terms of assembly, monomer.

It is found in the cytoplasm. It catalyses the reaction GTP + H2O = GDP + phosphate + H(+). Functionally, GTP hydrolase that promotes the GTP-dependent binding of aminoacyl-tRNA to the A-site of ribosomes during protein biosynthesis. This Herpetosiphon aurantiacus (Herpetosiphon giganteus) protein is Elongation factor Tu.